Consider the following 300-residue polypeptide: Porphobilinogen deaminase (300 aa).

Cys239 bears the S-(dipyrrolylmethanemethyl)cysteine mark.

The protein belongs to the HMBS family. Monomer. It depends on dipyrromethane as a cofactor.

The enzyme catalyses 4 porphobilinogen + H2O = hydroxymethylbilane + 4 NH4(+). Its pathway is porphyrin-containing compound metabolism; protoporphyrin-IX biosynthesis; coproporphyrinogen-III from 5-aminolevulinate: step 2/4. In terms of biological role, tetrapolymerization of the monopyrrole PBG into the hydroxymethylbilane pre-uroporphyrinogen in several discrete steps. The protein is Porphobilinogen deaminase of Francisella tularensis subsp. novicida (strain U112).